The following is a 304-amino-acid chain: Dihydroorotate dehydrogenase B (NAD(+)), catalytic subunit (304 aa).

FMN contacts are provided by residues Ser21 and 45 to 46 (KA). Residues Lys45 and 69 to 73 (NAIGL) each bind substrate. 2 residues coordinate FMN: Asn99 and Asn127. A substrate-binding site is contributed by Asn127. Cys130 acts as the Nucleophile in catalysis. Lys165 and Ile191 together coordinate FMN. 192 to 193 (NT) serves as a coordination point for substrate. Residues Gly217, 243-244 (GG), and 265-266 (GT) contribute to the FMN site.

Belongs to the dihydroorotate dehydrogenase family. Type 1 subfamily. Heterotetramer of 2 PyrK and 2 PyrD type B subunits. Requires FMN as cofactor.

The protein localises to the cytoplasm. It carries out the reaction (S)-dihydroorotate + NAD(+) = orotate + NADH + H(+). It participates in pyrimidine metabolism; UMP biosynthesis via de novo pathway; orotate from (S)-dihydroorotate (NAD(+) route): step 1/1. Functionally, catalyzes the conversion of dihydroorotate to orotate with NAD(+) as electron acceptor. The chain is Dihydroorotate dehydrogenase B (NAD(+)), catalytic subunit (pyrD) from Listeria monocytogenes serotype 4a (strain HCC23).